The primary structure comprises 2153 residues: RNA-directed RNA polymerase L (2153 aa).

Residues H36, E54, D97, E110, and V111 each coordinate Mn(2+). Residue K124 is the For endonuclease activity of the active site. Residues 957 to 1143 enclose the RdRp catalytic domain; the sequence is TGKKIRFKRK…AVNQEMWKSM (187 aa). A Mg(2+)-binding site is contributed by D1100.

It belongs to the Bunyavirales RNA polymerase family. Interacts with the viral nucleoprotein. It depends on Mn(2+) as a cofactor. The cofactor is Mg(2+).

Its subcellular location is the host cytoplasm. The protein localises to the host perinuclear region. It carries out the reaction RNA(n) + a ribonucleoside 5'-triphosphate = RNA(n+1) + diphosphate. RNA-dependent RNA polymerase, which is responsible for the replication and transcription of the viral RNA genome using antigenomic RNA as an intermediate. During transcription, synthesizes subgenomic RNAs and assures their capping by a cap-snatching mechanism, which involves the endonuclease activity cleaving the host capped pre-mRNAs. These short capped RNAs are then used as primers for viral transcription. Cleaves ssRNA substrates but not DNA. Seems to downregulate the expression of its own and heterologous mRNAs through its endonuclease activity. The chain is RNA-directed RNA polymerase L from Black Creek Canal orthohantavirus (BCCV).